The chain runs to 199 residues: ATP-dependent Clp protease proteolytic subunit (199 aa).

Ser-99 serves as the catalytic Nucleophile. The active site involves His-124.

Belongs to the peptidase S14 family. As to quaternary structure, fourteen ClpP subunits assemble into 2 heptameric rings which stack back to back to give a disk-like structure with a central cavity, resembling the structure of eukaryotic proteasomes.

The protein localises to the cytoplasm. The enzyme catalyses Hydrolysis of proteins to small peptides in the presence of ATP and magnesium. alpha-casein is the usual test substrate. In the absence of ATP, only oligopeptides shorter than five residues are hydrolyzed (such as succinyl-Leu-Tyr-|-NHMec, and Leu-Tyr-Leu-|-Tyr-Trp, in which cleavage of the -Tyr-|-Leu- and -Tyr-|-Trp bonds also occurs).. Functionally, cleaves peptides in various proteins in a process that requires ATP hydrolysis. Has a chymotrypsin-like activity. Plays a major role in the degradation of misfolded proteins. The chain is ATP-dependent Clp protease proteolytic subunit from Lactococcus lactis subsp. lactis (strain IL1403) (Streptococcus lactis).